A 690-amino-acid chain; its full sequence is DNA ligase (690 aa).

NAD(+)-binding positions include 36–40 (DSVYD), 85–86 (SL), and E124. The active-site N6-AMP-lysine intermediate is the K126. NAD(+) contacts are provided by R147, E184, K308, and K332. Residues C426, C429, C444, and C449 each coordinate Zn(2+). The region spanning 614–690 (NQSNVFDGKS…INENELKLLL (77 aa)) is the BRCT domain.

This sequence belongs to the NAD-dependent DNA ligase family. LigA subfamily. Requires Mg(2+) as cofactor. The cofactor is Mn(2+).

The enzyme catalyses NAD(+) + (deoxyribonucleotide)n-3'-hydroxyl + 5'-phospho-(deoxyribonucleotide)m = (deoxyribonucleotide)n+m + AMP + beta-nicotinamide D-nucleotide.. Its function is as follows. DNA ligase that catalyzes the formation of phosphodiester linkages between 5'-phosphoryl and 3'-hydroxyl groups in double-stranded DNA using NAD as a coenzyme and as the energy source for the reaction. It is essential for DNA replication and repair of damaged DNA. This Prochlorococcus marinus (strain NATL2A) protein is DNA ligase.